A 496-amino-acid polypeptide reads, in one-letter code: N-acetylmuramoyl-L-alanine amidase LytC (496 aa).

An N-terminal signal peptide occupies residues 1–24; sequence MRSYIKVLTMCFLGLILFVPTALA. A run of 3 repeats spans residues 30-128, 129-222, and 223-318. Residues 30 to 318 form a 3 X tandem repeats region; it reads RVGGSNRYGT…VANQLKNPVV (289 aa). Positions 322–490 constitute a MurNAc-LAA domain; the sequence is IFIDPGHGDQ…DKAAQAIHDG (169 aa).

It belongs to the N-acetylmuramoyl-L-alanine amidase 3 family.

It localises to the secreted. It is found in the cell wall. It carries out the reaction Hydrolyzes the link between N-acetylmuramoyl residues and L-amino acid residues in certain cell-wall glycopeptides.. Its function is as follows. Autolysins are cell wall hydrolases involved in some important biological processes such as cell separation, cell-wall turnover, competence for genetic transformation, formation of the flagella - in particular of its basal body - and sporulation. Has a high affinity for teichoic acid-endowed peptidoglycan. LytC is required for efficient swarming motility but not at the level of cell separation or flagellum biosynthesis. Rather, LytC appears to be important for proper flagellar function. The chain is N-acetylmuramoyl-L-alanine amidase LytC (lytC) from Bacillus subtilis (strain 168).